Here is a 437-residue protein sequence, read N- to C-terminus: Vacuolar protein sorting-associated protein 4A (437 aa).

The MIT domain maps to 2–80 (TTSTLQKAID…KDYLRNKEKH (79 aa)). An N6-acetyllysine modification is found at Lys-8. The stretch at 15 to 37 (KATEEDKAKNYEEALRLYQHAVE) forms a coiled coil. The disordered stretch occupies residues 75 to 106 (RNKEKHGKKPVKENQSEGKGSDSDSEGDNPEK). The span at 84 to 96 (PVKENQSEGKGSD) shows a compositional bias: basic and acidic residues. Ser-95 and Ser-97 each carry phosphoserine. 167 to 174 (GPPGTGKS) contributes to the ATP binding site.

The protein belongs to the AAA ATPase family. In terms of assembly, proposed to be monomeric or homodimeric in nucleotide-free form and to oligomerize upon binding to ATP to form two stacked hexameric or heptameric rings with a central pore through which ESCRT-III substrates are translocated in an ATP-dependent manner. Interacts with CHMP1A, CHMP1B, CHMP2A, CHMP2B, CHMP3, CHMP4A, CHMP4B, CHMP4C and CHMP6. Interacts with VPS4B; the interaction suggests a heteromeric assembly with VPS4B. Interacts with SPAST. Interacts with IST1. Interacts with ZFYVE19/ANCHR; leading to retain it at midbody. As to expression, highly expressed in testis and moderately in heart and brain. Not detected in spleen, lung, liver, skeletal muscle or kidney.

It is found in the late endosome membrane. It localises to the midbody. The protein localises to the cytoplasm. The protein resides in the cytoskeleton. Its subcellular location is the spindle. The enzyme catalyses ATP + H2O = ADP + phosphate + H(+). In terms of biological role, involved in late steps of the endosomal multivesicular bodies (MVB) pathway. Recognizes membrane-associated ESCRT-III assemblies and catalyzes their disassembly, possibly in combination with membrane fission. Redistributes the ESCRT-III components to the cytoplasm for further rounds of MVB sorting. MVBs contain intraluminal vesicles (ILVs) that are generated by invagination and scission from the limiting membrane of the endosome and mostly are delivered to lysosomes enabling degradation of membrane proteins, such as stimulated growth factor receptors, lysosomal enzymes and lipids. It is required for proper accomplishment of various processes including the regulation of endosome size, primary cilium organization, mitotic spindle organization and chromosome segregation, and nuclear envelope sealing and spindle disassembly during anaphase. In conjunction with the ESCRT machinery also appears to function in topologically equivalent membrane fission events, such as the terminal stages of cytokinesis. Involved in cytokinesis: retained at the midbody by ZFYVE19/ANCHR and CHMP4C until abscission checkpoint signaling is terminated at late cytokinesis. It is then released following dephosphorylation of CHMP4C, leading to abscission. VPS4A/B are required for the exosomal release of SDCBP, CD63 and syndecan. Critical for normal erythroblast cytokinesis and correct erythropoiesis. This is Vacuolar protein sorting-associated protein 4A from Mus musculus (Mouse).